The primary structure comprises 308 residues: D-alanine--D-alanine ligase B (308 aa).

Residues 102–302 (KKIVKTVGVP…FGELLSWMVE (201 aa)) form the ATP-grasp domain. 128-183 (PMKPPYVIKPVNEGSSFGVVIVSEGQSHPPQVVGSSEWKYGDTVMVERYIHGRELT) lines the ATP pocket. Mg(2+) is bound by residues Asp-252, Glu-269, and Asn-271.

Belongs to the D-alanine--D-alanine ligase family. The cofactor is Mg(2+). Mn(2+) serves as cofactor.

It localises to the cytoplasm. It carries out the reaction 2 D-alanine + ATP = D-alanyl-D-alanine + ADP + phosphate + H(+). The protein operates within cell wall biogenesis; peptidoglycan biosynthesis. Cell wall formation. This Mesorhizobium japonicum (strain LMG 29417 / CECT 9101 / MAFF 303099) (Mesorhizobium loti (strain MAFF 303099)) protein is D-alanine--D-alanine ligase B.